Consider the following 169-residue polypeptide: Ribosome maturation factor RimM (169 aa).

Residues 97–169 form the PRC barrel domain; the sequence is EDEVYFKDLI…KIVVDWEYDY (73 aa).

It belongs to the RimM family. In terms of assembly, binds ribosomal protein uS19.

It localises to the cytoplasm. Its function is as follows. An accessory protein needed during the final step in the assembly of 30S ribosomal subunit, possibly for assembly of the head region. Essential for efficient processing of 16S rRNA. May be needed both before and after RbfA during the maturation of 16S rRNA. It has affinity for free ribosomal 30S subunits but not for 70S ribosomes. This chain is Ribosome maturation factor RimM, found in Francisella tularensis subsp. tularensis (strain FSC 198).